The following is a 178-amino-acid chain: Large ribosomal subunit protein uL6 (178 aa).

This sequence belongs to the universal ribosomal protein uL6 family. Part of the 50S ribosomal subunit.

Functionally, this protein binds to the 23S rRNA, and is important in its secondary structure. It is located near the subunit interface in the base of the L7/L12 stalk, and near the tRNA binding site of the peptidyltransferase center. The polypeptide is Large ribosomal subunit protein uL6 (Lactococcus lactis subsp. cremoris (strain SK11)).